We begin with the raw amino-acid sequence, 109 residues long: Nucleoid-associated protein Ping_2276 (109 aa).

The protein belongs to the YbaB/EbfC family. In terms of assembly, homodimer.

It localises to the cytoplasm. It is found in the nucleoid. In terms of biological role, binds to DNA and alters its conformation. May be involved in regulation of gene expression, nucleoid organization and DNA protection. The protein is Nucleoid-associated protein Ping_2276 of Psychromonas ingrahamii (strain DSM 17664 / CCUG 51855 / 37).